An 84-amino-acid polypeptide reads, in one-letter code: RNA-binding protein Hfq (84 aa).

The Sm domain maps to Asp10–Val70.

Belongs to the Hfq family. In terms of assembly, homohexamer.

In terms of biological role, RNA chaperone that binds small regulatory RNA (sRNAs) and mRNAs to facilitate mRNA translational regulation in response to envelope stress, environmental stress and changes in metabolite concentrations. Also binds with high specificity to tRNAs. This is RNA-binding protein Hfq from Moorella thermoacetica (strain ATCC 39073 / JCM 9320).